The sequence spans 369 residues: Omega-amidase, chloroplastic (369 aa).

The N-terminal 63 residues, 1–63, are a transit peptide targeting the chloroplast; that stretch reads MKSAISSSLF…SALRSISSSM (63 aa). Ala64 is modified (N-acetylalanine). Positions 88–337 constitute a CN hydrolase domain; it reads FNIGLCQLSV…EAIIIAEIDY (250 aa). Glu127 functions as the Proton acceptor in the catalytic mechanism. The active-site Proton donor is Lys201. Catalysis depends on Cys242, which acts as the Nucleophile.

Belongs to the nitrilase superfamily. NIT1/NIT2 family.

It localises to the plastid. Its subcellular location is the chloroplast. It carries out the reaction a monoamide of a dicarboxylate + H2O = a dicarboxylate + NH4(+). Omega-amidase involved in the metabolism of asparagine. Probably also closely coupled with glutamine transamination in the methionine salvage cycle. Can use alpha-ketosuccinamate and alpha-hydroxysuccinamate as substrates, producing respectively oxaloacetate and malate, or alpha-ketoglutaramate, producing alpha-ketoglutarate. This Arabidopsis thaliana (Mouse-ear cress) protein is Omega-amidase, chloroplastic.